The chain runs to 441 residues: N-acetylmuramyl-L-alanine amidase (441 aa).

An N-terminal signal peptide occupies residues 1–25; sequence MKTKTLFIFSAILTLSIFAPNETFA.

It belongs to the peptidase S12 family.

It carries out the reaction Hydrolyzes the link between N-acetylmuramoyl residues and L-amino acid residues in certain cell-wall glycopeptides.. Its pathway is cell wall biogenesis; peptidoglycan recycling. Involved in muropeptide recycling. Hydrolyzes the amide bond between N-acetylmuramic acid (MurNAc) and the L-alanine residue of the stem peptide. Cannot hydrolyze muropeptides containing N-acetylglucosamine (GlcNAc) at the non-reducing end. In Bacillus subtilis (strain 168), this protein is N-acetylmuramyl-L-alanine amidase.